Here is a 52-residue protein sequence, read N- to C-terminus: Photosystem II reaction center protein M (52 aa).

The helical transmembrane segment at 6–26 (FGFAASLLFVGVPTIFLIGLF) threads the bilayer. The tract at residues 31-52 (DGEKSSFYSDTSKGRLSPEPKK) is disordered. Residues 42 to 52 (SKGRLSPEPKK) are compositionally biased toward basic and acidic residues.

This sequence belongs to the PsbM family. In terms of assembly, PSII is composed of 1 copy each of membrane proteins PsbA, PsbB, PsbC, PsbD, PsbE, PsbF, PsbH, PsbI, PsbJ, PsbK, PsbL, PsbM, PsbT, PsbX, PsbY, Psb30/Ycf12, peripheral proteins PsbO, CyanoQ (PsbQ), PsbU, PsbV and a large number of cofactors. It forms dimeric complexes.

Its subcellular location is the cellular thylakoid membrane. Its function is as follows. One of the components of the core complex of photosystem II (PSII). PSII is a light-driven water:plastoquinone oxidoreductase that uses light energy to abstract electrons from H(2)O, generating O(2) and a proton gradient subsequently used for ATP formation. It consists of a core antenna complex that captures photons, and an electron transfer chain that converts photonic excitation into a charge separation. This subunit is found at the monomer-monomer interface. The polypeptide is Photosystem II reaction center protein M (Prochlorococcus marinus (strain NATL1A)).